Here is a 220-residue protein sequence, read N- to C-terminus: Inner membrane protein YqjA (220 aa).

The Periplasmic segment spans residues 1-27 (MELLTQLLQALWAQDFETLANPSMIGM). A helical transmembrane segment spans residues 28 to 48 (LYFVLFVILFLENGLLPAAFL). Topologically, residues 49 to 52 (PGDS) are cytoplasmic. 2 consecutive transmembrane segments (helical) span residues 53–73 (LLVL…QTIL) and 74–94 (LLTV…RWLG). The Cytoplasmic segment spans residues 95–154 (NTRTVQNWLSHLPAHYHQRAHHLFHKHGLSALLIGRFIAFVRTLLPTIAGLSGLNNARFQ). Residues 155 to 175 (FFNWMSGLLWVLILTTLGYML) traverse the membrane as a helical segment. Residues 176-191 (GKTPVFLKYEDQLMSC) are Periplasmic-facing. Residues 192 to 212 (LMLLPVVLLVFGLAGSLVVLW) traverse the membrane as a helical segment. The Cytoplasmic portion of the chain corresponds to 213–220 (KKKYGNRG).

Belongs to the DedA family.

The protein localises to the cell inner membrane. Functionally, may be a membrane transporter required for proton motive force (PMF)-dependent drug efflux. Required, with YghB, for the proper export of certain periplasmic amidases and, possibly, other Tat substrates. May play a role in determining membrane lipid composition. This chain is Inner membrane protein YqjA (yqjA), found in Escherichia coli (strain K12).